The following is a 336-amino-acid chain: MTQHFKTFGVIGAGAWGTAIAQMLAREGQTVHLWALEPEVAAAINTARENTAFLKGVPLKPEIRATNKLEDLGLADAIFAVAPAQHTRTTLRALRASLRPGTPVVLCSKGIELATGEFMTQVLKDELPEAIPAVMSGPSFAIDVAKGLPTAVTLAIEDTRLGTELIQAISTPTFRPYLGTDLLGAEVGGSVKNVLAIACGIALGKGLGRSAHAALIARGYAEMTRLALTLGAEAETLTGLSGLGDLVLTCSSETSRNMSLGLALGKGETLASILAARNAVTEGVATAPVLRRLARSQGIEMPICEAVAAVIEGEITVDDAITALLMRPVKAEAVKP.

NADPH contacts are provided by W16 and K109. Residues K109, G137, and S139 each contribute to the sn-glycerol 3-phosphate site. A141 provides a ligand contact to NADPH. Positions 192, 245, 255, 256, and 257 each coordinate sn-glycerol 3-phosphate. Catalysis depends on K192, which acts as the Proton acceptor. R256 is a binding site for NADPH. Residues V280 and E282 each contribute to the NADPH site.

This sequence belongs to the NAD-dependent glycerol-3-phosphate dehydrogenase family.

It localises to the cytoplasm. The catalysed reaction is sn-glycerol 3-phosphate + NAD(+) = dihydroxyacetone phosphate + NADH + H(+). The enzyme catalyses sn-glycerol 3-phosphate + NADP(+) = dihydroxyacetone phosphate + NADPH + H(+). Its pathway is membrane lipid metabolism; glycerophospholipid metabolism. In terms of biological role, catalyzes the reduction of the glycolytic intermediate dihydroxyacetone phosphate (DHAP) to sn-glycerol 3-phosphate (G3P), the key precursor for phospholipid synthesis. The protein is Glycerol-3-phosphate dehydrogenase [NAD(P)+] of Hyphomonas neptunium (strain ATCC 15444).